A 337-amino-acid polypeptide reads, in one-letter code: Tetraacyldisaccharide 4'-kinase (337 aa).

72-79 is a binding site for ATP; that stretch reads TVGGSGKT.

The protein belongs to the LpxK family.

The enzyme catalyses a lipid A disaccharide + ATP = a lipid IVA + ADP + H(+). It participates in glycolipid biosynthesis; lipid IV(A) biosynthesis; lipid IV(A) from (3R)-3-hydroxytetradecanoyl-[acyl-carrier-protein] and UDP-N-acetyl-alpha-D-glucosamine: step 6/6. Functionally, transfers the gamma-phosphate of ATP to the 4'-position of a tetraacyldisaccharide 1-phosphate intermediate (termed DS-1-P) to form tetraacyldisaccharide 1,4'-bis-phosphate (lipid IVA). This chain is Tetraacyldisaccharide 4'-kinase, found in Shewanella sediminis (strain HAW-EB3).